A 210-amino-acid polypeptide reads, in one-letter code: Large ribosomal subunit protein uL4 (210 aa).

Polar residues predominate over residues 41 to 52 (MNNARQGTASSK). Residues 41–80 (MNNARQGTASSKTRSEVRGGGRKPWRQKGTGRARAGSSRS) form a disordered region. Residues 60–71 (GGRKPWRQKGTG) are compositionally biased toward basic residues.

Belongs to the universal ribosomal protein uL4 family. In terms of assembly, part of the 50S ribosomal subunit.

Its function is as follows. One of the primary rRNA binding proteins, this protein initially binds near the 5'-end of the 23S rRNA. It is important during the early stages of 50S assembly. It makes multiple contacts with different domains of the 23S rRNA in the assembled 50S subunit and ribosome. Functionally, forms part of the polypeptide exit tunnel. This Acaryochloris marina (strain MBIC 11017) protein is Large ribosomal subunit protein uL4.